The following is a 299-amino-acid chain: Probable lipid kinase YegS (299 aa).

Residues alanine 2–threonine 133 form the DAGKc domain. Residues threonine 40, glycine 66–glutamate 72, and threonine 95 contribute to the ATP site. Leucine 215, aspartate 218, and leucine 220 together coordinate Mg(2+). The active-site Proton acceptor is glutamate 271.

This sequence belongs to the diacylglycerol/lipid kinase family. YegS lipid kinase subfamily. It depends on Mg(2+) as a cofactor. Ca(2+) is required as a cofactor.

The protein localises to the cytoplasm. Its function is as follows. Probably phosphorylates lipids; the in vivo substrate is unknown. The chain is Probable lipid kinase YegS from Escherichia coli (strain 55989 / EAEC).